Reading from the N-terminus, the 259-residue chain is Deoxyribose-phosphate aldolase (259 aa).

Asp102 functions as the Proton donor/acceptor in the catalytic mechanism. Residue Lys167 is the Schiff-base intermediate with acetaldehyde of the active site. Residue Lys201 is the Proton donor/acceptor of the active site.

Belongs to the DeoC/FbaB aldolase family. DeoC type 2 subfamily.

Its subcellular location is the cytoplasm. It catalyses the reaction 2-deoxy-D-ribose 5-phosphate = D-glyceraldehyde 3-phosphate + acetaldehyde. The protein operates within carbohydrate degradation; 2-deoxy-D-ribose 1-phosphate degradation; D-glyceraldehyde 3-phosphate and acetaldehyde from 2-deoxy-alpha-D-ribose 1-phosphate: step 2/2. In terms of biological role, catalyzes a reversible aldol reaction between acetaldehyde and D-glyceraldehyde 3-phosphate to generate 2-deoxy-D-ribose 5-phosphate. This Escherichia coli O8 (strain IAI1) protein is Deoxyribose-phosphate aldolase.